A 329-amino-acid polypeptide reads, in one-letter code: Mas-related G-protein coupled receptor member X2 (329 aa).

Residues 1 to 33 (MDPTTPAWGTESTTMDGNDQSLPLLCDKEALIP) are Extracellular-facing. A helical transmembrane segment spans residues 34–54 (VFLILFIALVGLVGNGFVLWL). The Cytoplasmic segment spans residues 55–63 (LGFRMSRNA). The chain crosses the membrane as a helical span at residues 64–84 (FSVYVLSLAGADFLFLCFQII). Residues 85 to 96 (NCLVYLRDFFCS) are Extracellular-facing. A helical membrane pass occupies residues 97–117 (ISINFPSXFTTVMTCAYLAGL). The Cytoplasmic portion of the chain corresponds to 118 to 144 (SMLSTISTERCLSVLWPIWYRCRRPRH). The helical transmembrane segment at 145–165 (LSAVVCVLLWALSLLLSILEG) threads the bilayer. Residues 166 to 184 (KFCGFLFSDGDFGWCQIFD) lie on the Extracellular side of the membrane. A helical transmembrane segment spans residues 185–205 (FITAAWLIFLFVVLCASSLAL). Residues 206-228 (LVRILCGSRGLPLTRLYLTILLT) lie on the Cytoplasmic side of the membrane. Residues 229 to 249 (VLVFLLCGLPFGIQWFLILGF) traverse the membrane as a helical segment. Residues 250–263 (WNSDVLLCHIHLVS) are Extracellular-facing. The helical transmembrane segment at 264-284 (VVLSSLNSSANPIIYFFVGSF) threads the bilayer. At 285–329 (RKQWRLQQPILKLAFQRALQDTAEVDHSEGCFPQGTSEMSRSSLV) the chain is on the cytoplasmic side.

This sequence belongs to the G-protein coupled receptor 1 family. Mas subfamily.

Its subcellular location is the cell membrane. Its function is as follows. Mast cell-specific receptor for basic secretagogues, i.e. cationic amphiphilic drugs, as well as endo- or exogenous peptides, consisting of a basic head group and a hydrophobic core. Recognizes and binds small molecules containing a cyclized tetrahydroisoquinoline (THIQ), such as non-steroidal neuromuscular blocking drugs (NMBDs), including tubocurarine and atracurium. In response to these compounds, mediates pseudo-allergic reactions characterized by histamine release, inflammation and airway contraction. In Hoolock hoolock (Western hoolock gibbon), this protein is Mas-related G-protein coupled receptor member X2 (MRGPRX2).